Consider the following 360-residue polypeptide: MPLSRLIINNFRNLQSLDLELSPNFNFIVGHNGSGKTSLLEAIFYLGHGRSFKSHISNRIIHYQAEDFVLHARIDEGQHQWSVGIQKKRSGDTLLKINGEDGNKISDLAHLLPMQVITPEGLTLLNGGPTFRRAFLDWGLFHQYTEFYSCWANLKRLLKQRNAALHQVRSYAELKPWDTELAKLAEIVSQMRANYAEALRPEIEKTCQFFLPELEIGVSFHQGWEKGTDYAEILAQGFERDKAMGYTMIGPQKADFRFRANGLPVEDVLSRGQLKLLMCVLRLAQGEYLVAQKERQCLFLIDDFASELDPIKRELLAHRLRESGSQVFVTAITKDQLNQMQWQESEQDSLFQVQQGMLTK.

30–37 (GHNGSGKT) contacts ATP.

The protein belongs to the RecF family.

It localises to the cytoplasm. Its function is as follows. The RecF protein is involved in DNA metabolism; it is required for DNA replication and normal SOS inducibility. RecF binds preferentially to single-stranded, linear DNA. It also seems to bind ATP. The chain is DNA replication and repair protein RecF from Actinobacillus pleuropneumoniae serotype 5b (strain L20).